Reading from the N-terminus, the 137-residue chain is Ribosome-binding factor A (137 aa).

A disordered region spans residues 110 to 137 (RIQQEKEGATDDRDQNDSGEDATPHSND). A compositionally biased stretch (basic and acidic residues) spans 112–125 (QQEKEGATDDRDQN).

Belongs to the RbfA family. Monomer. Binds 30S ribosomal subunits, but not 50S ribosomal subunits or 70S ribosomes.

The protein localises to the cytoplasm. Functionally, one of several proteins that assist in the late maturation steps of the functional core of the 30S ribosomal subunit. Associates with free 30S ribosomal subunits (but not with 30S subunits that are part of 70S ribosomes or polysomes). Required for efficient processing of 16S rRNA. May interact with the 5'-terminal helix region of 16S rRNA. The polypeptide is Ribosome-binding factor A (Rhodopirellula baltica (strain DSM 10527 / NCIMB 13988 / SH1)).